Consider the following 175-residue polypeptide: Crossover junction endodeoxyribonuclease RuvC (175 aa).

Active-site residues include aspartate 11, glutamate 71, and histidine 143. Aspartate 11, glutamate 71, and histidine 143 together coordinate Mg(2+).

The protein belongs to the RuvC family. As to quaternary structure, homodimer which binds Holliday junction (HJ) DNA. The HJ becomes 2-fold symmetrical on binding to RuvC with unstacked arms; it has a different conformation from HJ DNA in complex with RuvA. In the full resolvosome a probable DNA-RuvA(4)-RuvB(12)-RuvC(2) complex forms which resolves the HJ. The cofactor is Mg(2+).

The protein resides in the cytoplasm. The catalysed reaction is Endonucleolytic cleavage at a junction such as a reciprocal single-stranded crossover between two homologous DNA duplexes (Holliday junction).. Its function is as follows. The RuvA-RuvB-RuvC complex processes Holliday junction (HJ) DNA during genetic recombination and DNA repair. Endonuclease that resolves HJ intermediates. Cleaves cruciform DNA by making single-stranded nicks across the HJ at symmetrical positions within the homologous arms, yielding a 5'-phosphate and a 3'-hydroxyl group; requires a central core of homology in the junction. The consensus cleavage sequence is 5'-(A/T)TT(C/G)-3'. Cleavage occurs on the 3'-side of the TT dinucleotide at the point of strand exchange. HJ branch migration catalyzed by RuvA-RuvB allows RuvC to scan DNA until it finds its consensus sequence, where it cleaves and resolves the cruciform DNA. This is Crossover junction endodeoxyribonuclease RuvC from Parvibaculum lavamentivorans (strain DS-1 / DSM 13023 / NCIMB 13966).